Reading from the N-terminus, the 699-residue chain is tRNA(Met) cytidine acetyltransferase TmcA (699 aa).

ATP is bound by residues Gln179, 201–210, and Arg323; that span reads GRGKSTLAGM. The N-acetyltransferase domain occupies 359–543; that stretch reads IEIPLYEQRD…SGCYTAMALL (185 aa). Acetyl-CoA is bound by residues 471-473, Glu511, and Arg518; that span reads VAV.

This sequence belongs to the RNA cytidine acetyltransferase family. TmcA subfamily.

Its subcellular location is the cytoplasm. The enzyme catalyses cytidine(34) in elongator tRNA(Met) + acetyl-CoA + ATP + H2O = N(4)-acetylcytidine(34) in elongator tRNA(Met) + ADP + phosphate + CoA + H(+). Functionally, catalyzes the formation of N(4)-acetylcytidine (ac(4)C) at the wobble position of tRNA(Met), by using acetyl-CoA as an acetyl donor and ATP (or GTP). This is tRNA(Met) cytidine acetyltransferase TmcA from Yersinia pestis (strain D106004).